A 432-amino-acid chain; its full sequence is Adenylosuccinate synthetase (432 aa).

Residues 13–19 (GDEGKGK) and 41–43 (GHT) each bind GTP. Aspartate 14 functions as the Proton acceptor in the catalytic mechanism. Residues aspartate 14 and glycine 41 each coordinate Mg(2+). IMP-binding positions include 14-17 (DEGK), 39-42 (NAGH), threonine 130, arginine 144, glutamine 225, threonine 240, and arginine 304. The active-site Proton donor is histidine 42. A substrate-binding site is contributed by 300-306 (ATTGRKR). Residues arginine 306, 332–334 (KLD), and 415–417 (STG) contribute to the GTP site.

This sequence belongs to the adenylosuccinate synthetase family. Homodimer. It depends on Mg(2+) as a cofactor.

Its subcellular location is the cytoplasm. The enzyme catalyses IMP + L-aspartate + GTP = N(6)-(1,2-dicarboxyethyl)-AMP + GDP + phosphate + 2 H(+). It participates in purine metabolism; AMP biosynthesis via de novo pathway; AMP from IMP: step 1/2. In terms of biological role, plays an important role in the de novo pathway of purine nucleotide biosynthesis. Catalyzes the first committed step in the biosynthesis of AMP from IMP. The protein is Adenylosuccinate synthetase of Pseudoalteromonas atlantica (strain T6c / ATCC BAA-1087).